Consider the following 295-residue polypeptide: Ethanolamine ammonia-lyase small subunit (295 aa).

2 residues coordinate adenosylcob(III)alamin: V208 and E229.

Belongs to the EutC family. The basic unit is a heterodimer which dimerizes to form tetramers. The heterotetramers trimerize; 6 large subunits form a core ring with 6 small subunits projecting outwards. It depends on adenosylcob(III)alamin as a cofactor.

It is found in the bacterial microcompartment. It carries out the reaction ethanolamine = acetaldehyde + NH4(+). It participates in amine and polyamine degradation; ethanolamine degradation. Its function is as follows. Catalyzes the deamination of various vicinal amino-alcohols to oxo compounds. Allows this organism to utilize ethanolamine as the sole source of nitrogen and carbon in the presence of external vitamin B12. The polypeptide is Ethanolamine ammonia-lyase small subunit (Fusobacterium nucleatum subsp. nucleatum (strain ATCC 25586 / DSM 15643 / BCRC 10681 / CIP 101130 / JCM 8532 / KCTC 2640 / LMG 13131 / VPI 4355)).